The chain runs to 238 residues: Ribonuclease HII (238 aa).

Residues 12 to 197 (GIVAGVDEAG…VLELLTDDLL (186 aa)) enclose the RNase H type-2 domain. Positions 18, 19, and 107 each coordinate a divalent metal cation.

It belongs to the RNase HII family. It depends on Mn(2+) as a cofactor. Mg(2+) is required as a cofactor.

It is found in the cytoplasm. It carries out the reaction Endonucleolytic cleavage to 5'-phosphomonoester.. Endonuclease that specifically degrades the RNA of RNA-DNA hybrids. The protein is Ribonuclease HII of Thermotoga petrophila (strain ATCC BAA-488 / DSM 13995 / JCM 10881 / RKU-1).